The chain runs to 356 residues: A-type ATP synthase subunit C (356 aa).

This sequence belongs to the V-ATPase V0D/AC39 subunit family. Has multiple subunits with at least A(3), B(3), C, D, E, F, H, I and proteolipid K(x).

The protein localises to the cell membrane. Functionally, component of the A-type ATP synthase that produces ATP from ADP in the presence of a proton gradient across the membrane. This is A-type ATP synthase subunit C from Thermoplasma volcanium (strain ATCC 51530 / DSM 4299 / JCM 9571 / NBRC 15438 / GSS1).